The chain runs to 432 residues: MKFTLVATVLLTFSLSAFAVEYPVLTTASPDQVGFDSQKLHRLDGWIQNQIDAGYPSINLLVIKDNHIVLQKAWGYAKKYDGSTLLAHPIRATTNTMYDLASNTKMYATNFALQKLVYEGKIDVNDLVSKYIPGFKDMPGDKIKGKDKLRIIDILHHVAGFPADPQYPNKNVAGKLFSQSKSTTLEMIKKTPLEYQPGSKHIYSDVDYMILGFIIESITAMPLDRYVETTIYKPLGLKHTVFNPLMKGFTPPQIAATELHGNTRDGVIHFPNIRTNTLWGQVHDEKAWYSMGGVSGHAGLFSDTHDMAVLMQVMLNGGGYGNVKLFDDKTVAQFTRRSPEDATFGLGWRVNGNASMTPTFGVLASPQTYGHTGWTGTLTSIDPVNHMAIVILGNRPHSPVANPKVNPNVFVSGLLPAATYGWIVDQIYGSLK.

Residues 7 to 25 (ATVLLTFSLSAFAVEYPVL) form a helical; Signal-anchor membrane-spanning segment.

This sequence belongs to the peptidase S12 family. YfeW subfamily.

The protein resides in the cell inner membrane. The enzyme catalyses Preferential cleavage: (Ac)2-L-Lys-D-Ala-|-D-Ala. Also transpeptidation of peptidyl-alanyl moieties that are N-acyl substituents of D-alanine.. This chain is Putative D-alanyl-D-alanine carboxypeptidase, found in Salmonella choleraesuis (strain SC-B67).